A 206-amino-acid polypeptide reads, in one-letter code: Probable GTP-binding protein EngB (206 aa).

The EngB-type G domain maps to 23 to 197 (QGIEVAFAGR…ERVLDKWFGY (175 aa)). GTP-binding positions include 31 to 38 (GRSNAGKS), 58 to 62 (GRTQL), 76 to 79 (DLPG), 143 to 146 (TKAD), and 176 to 178 (FSS). 2 residues coordinate Mg(2+): Ser-38 and Thr-60.

This sequence belongs to the TRAFAC class TrmE-Era-EngA-EngB-Septin-like GTPase superfamily. EngB GTPase family. Requires Mg(2+) as cofactor.

Functionally, necessary for normal cell division and for the maintenance of normal septation. This chain is Probable GTP-binding protein EngB, found in Pseudoalteromonas atlantica (strain T6c / ATCC BAA-1087).